The sequence spans 197 residues: Holliday junction resolvase RecU (197 aa).

The Mg(2+) site is built by T82, D84, E97, and Q116.

It belongs to the RecU family. Requires Mg(2+) as cofactor.

Its subcellular location is the cytoplasm. It carries out the reaction Endonucleolytic cleavage at a junction such as a reciprocal single-stranded crossover between two homologous DNA duplexes (Holliday junction).. Functionally, endonuclease that resolves Holliday junction intermediates in genetic recombination. Cleaves mobile four-strand junctions by introducing symmetrical nicks in paired strands. Promotes annealing of linear ssDNA with homologous dsDNA. Required for DNA repair, homologous recombination and chromosome segregation. The sequence is that of Holliday junction resolvase RecU from Streptococcus mutans serotype c (strain ATCC 700610 / UA159).